The sequence spans 226 residues: Putative N-acetylmannosamine-6-phosphate 2-epimerase (226 aa).

The protein belongs to the NanE family.

It catalyses the reaction an N-acyl-D-glucosamine 6-phosphate = an N-acyl-D-mannosamine 6-phosphate. The protein operates within amino-sugar metabolism; N-acetylneuraminate degradation; D-fructose 6-phosphate from N-acetylneuraminate: step 3/5. Its function is as follows. Converts N-acetylmannosamine-6-phosphate (ManNAc-6-P) to N-acetylglucosamine-6-phosphate (GlcNAc-6-P). This chain is Putative N-acetylmannosamine-6-phosphate 2-epimerase, found in Mycoplasma mycoides subsp. mycoides SC (strain CCUG 32753 / NCTC 10114 / PG1).